The primary structure comprises 362 residues: Phosphoserine aminotransferase (362 aa).

L-glutamate contacts are provided by serine 9 and arginine 42. Pyridoxal 5'-phosphate-binding positions include 76–77 (GR), tryptophan 102, threonine 153, aspartate 174, and glutamine 197. Lysine 198 bears the N6-(pyridoxal phosphate)lysine mark. 239 to 240 (NT) is a binding site for pyridoxal 5'-phosphate.

The protein belongs to the class-V pyridoxal-phosphate-dependent aminotransferase family. SerC subfamily. In terms of assembly, homodimer. The cofactor is pyridoxal 5'-phosphate.

It localises to the cytoplasm. The enzyme catalyses O-phospho-L-serine + 2-oxoglutarate = 3-phosphooxypyruvate + L-glutamate. It carries out the reaction 4-(phosphooxy)-L-threonine + 2-oxoglutarate = (R)-3-hydroxy-2-oxo-4-phosphooxybutanoate + L-glutamate. It functions in the pathway amino-acid biosynthesis; L-serine biosynthesis; L-serine from 3-phospho-D-glycerate: step 2/3. It participates in cofactor biosynthesis; pyridoxine 5'-phosphate biosynthesis; pyridoxine 5'-phosphate from D-erythrose 4-phosphate: step 3/5. Its function is as follows. Catalyzes the reversible conversion of 3-phosphohydroxypyruvate to phosphoserine and of 3-hydroxy-2-oxo-4-phosphonooxybutanoate to phosphohydroxythreonine. The sequence is that of Phosphoserine aminotransferase from Klebsiella pneumoniae (strain 342).